The sequence spans 239 residues: THAP domain-containing protein 3 (239 aa).

Residues 1-82 (MPKSCAARQC…LKHNAVPTVF (82 aa)) form a THAP-type zinc finger. 2 disordered regions span residues 88-125 (PQLV…LGRK) and 139-174 (VGGL…PTQP). Positions 176 to 179 (DHSY) match the HCFC1-binding motif (HBM) motif.

As to quaternary structure, component of a THAP1/THAP3-HCFC1-OGT complex that contains at least, either THAP1 or THAP3, HCFC1 and OGT. Interacts directly with OGT and HCFC1 (via its HBM).

Component of a THAP1/THAP3-HCFC1-OGT complex that is required for the regulation of the transcriptional activity of RRM1. This is THAP domain-containing protein 3 (THAP3) from Bos taurus (Bovine).